The primary structure comprises 314 residues: Formimidoylglutamase (314 aa).

Mn(2+) contacts are provided by H127, D153, H155, D157, D245, and D247.

This sequence belongs to the arginase family. Mn(2+) serves as cofactor.

It carries out the reaction N-formimidoyl-L-glutamate + H2O = formamide + L-glutamate. It participates in amino-acid degradation; L-histidine degradation into L-glutamate; L-glutamate from N-formimidoyl-L-glutamate (hydrolase route): step 1/1. Functionally, catalyzes the conversion of N-formimidoyl-L-glutamate to L-glutamate and formamide. The sequence is that of Formimidoylglutamase from Aeromonas hydrophila subsp. hydrophila (strain ATCC 7966 / DSM 30187 / BCRC 13018 / CCUG 14551 / JCM 1027 / KCTC 2358 / NCIMB 9240 / NCTC 8049).